A 178-amino-acid chain; its full sequence is Cell division protein SepF (178 aa).

The span at 19–45 (EHYESEHHTPHKDEDDSMEHDREERRA) shows a compositional bias: basic and acidic residues. The disordered stretch occupies residues 19 to 65 (EHYESEHHTPHKDEDDSMEHDREERRAPAPVREIARETPTPHAAEEE).

Belongs to the SepF family. In terms of assembly, homodimer. Interacts with FtsZ.

The protein localises to the cytoplasm. Cell division protein that is part of the divisome complex and is recruited early to the Z-ring. Probably stimulates Z-ring formation, perhaps through the cross-linking of FtsZ protofilaments. Its function overlaps with FtsA. This Arthrobacter sp. (strain FB24) protein is Cell division protein SepF.